The primary structure comprises 675 residues: Putative exonuclease GOR (675 aa).

A compositionally biased stretch (basic and acidic residues) spans 66-79; the sequence is VAKEAAPEASRHLG. 2 disordered regions span residues 66-90 and 225-263; these read VAKEAAPEASRHLGAEQSPAGAPEG and AKRTRVASSSQRSRGSKVGRQPGKTRNRSGMACKTTATT. Residues 358–483 are GOR1-125 epitope; it reads MPGLSRAALY…VRDGRKESLD (126 aa).

This sequence belongs to the REXO1/REXO3 family.

The protein localises to the cytoplasm. It is found in the nucleus. The sequence is that of Putative exonuclease GOR (REXO1L1P) from Homo sapiens (Human).